The chain runs to 174 residues: Large ribosomal subunit protein uL10 (174 aa).

This sequence belongs to the universal ribosomal protein uL10 family. As to quaternary structure, part of the ribosomal stalk of the 50S ribosomal subunit. The N-terminus interacts with L11 and the large rRNA to form the base of the stalk. The C-terminus forms an elongated spine to which L12 dimers bind in a sequential fashion forming a multimeric L10(L12)X complex.

Forms part of the ribosomal stalk, playing a central role in the interaction of the ribosome with GTP-bound translation factors. The protein is Large ribosomal subunit protein uL10 of Synechococcus sp. (strain RCC307).